We begin with the raw amino-acid sequence, 117 residues long: DNA-directed RNA polymerase subunit omega (117 aa).

Belongs to the RNA polymerase subunit omega family. As to quaternary structure, the RNAP catalytic core consists of 2 alpha, 1 beta, 1 beta' and 1 omega subunit. When a sigma factor is associated with the core the holoenzyme is formed, which can initiate transcription.

The catalysed reaction is RNA(n) + a ribonucleoside 5'-triphosphate = RNA(n+1) + diphosphate. In terms of biological role, promotes RNA polymerase assembly. Latches the N- and C-terminal regions of the beta' subunit thereby facilitating its interaction with the beta and alpha subunits. The protein is DNA-directed RNA polymerase subunit omega of Roseobacter denitrificans (strain ATCC 33942 / OCh 114) (Erythrobacter sp. (strain OCh 114)).